A 256-amino-acid polypeptide reads, in one-letter code: 7-cyano-7-deazaguanine synthase (256 aa).

The tract at residues 1–22 (MTDASADALTSPSNSGASQDTS) is disordered. Polar residues predominate over residues 8-22 (ALTSPSNSGASQDTS). ATP is bound at residue 30-40 (LSGGLDSVTCL). Zn(2+) is bound by residues cysteine 220, cysteine 230, cysteine 233, and cysteine 236.

This sequence belongs to the QueC family. Zn(2+) is required as a cofactor.

It carries out the reaction 7-carboxy-7-deazaguanine + NH4(+) + ATP = 7-cyano-7-deazaguanine + ADP + phosphate + H2O + H(+). The protein operates within purine metabolism; 7-cyano-7-deazaguanine biosynthesis. Its function is as follows. Catalyzes the ATP-dependent conversion of 7-carboxy-7-deazaguanine (CDG) to 7-cyano-7-deazaguanine (preQ(0)). The sequence is that of 7-cyano-7-deazaguanine synthase from Psychrobacter sp. (strain PRwf-1).